A 465-amino-acid polypeptide reads, in one-letter code: Ribulose bisphosphate carboxylase large chain (465 aa).

Position 4 is an N6,N6,N6-trimethyllysine (Lys-4). Substrate contacts are provided by Asn-113 and Thr-163. Catalysis depends on Lys-165, which acts as the Proton acceptor. Residue Lys-167 coordinates substrate. Positions 191, 193, and 194 each coordinate Mg(2+). Residue Lys-191 is modified to N6-carboxylysine. The active-site Proton acceptor is the His-284. Residues Arg-285, His-317, and Ser-369 each contribute to the substrate site.

It belongs to the RuBisCO large chain family. Type I subfamily. In terms of assembly, heterohexadecamer of 8 large chains and 8 small chains; disulfide-linked. The disulfide link is formed within the large subunit homodimers. Requires Mg(2+) as cofactor. In terms of processing, the disulfide bond which can form in the large chain dimeric partners within the hexadecamer appears to be associated with oxidative stress and protein turnover.

The protein resides in the plastid. Its subcellular location is the chloroplast. The enzyme catalyses 2 (2R)-3-phosphoglycerate + 2 H(+) = D-ribulose 1,5-bisphosphate + CO2 + H2O. It catalyses the reaction D-ribulose 1,5-bisphosphate + O2 = 2-phosphoglycolate + (2R)-3-phosphoglycerate + 2 H(+). In terms of biological role, ruBisCO catalyzes two reactions: the carboxylation of D-ribulose 1,5-bisphosphate, the primary event in carbon dioxide fixation, as well as the oxidative fragmentation of the pentose substrate in the photorespiration process. Both reactions occur simultaneously and in competition at the same active site. This Dillenia indica (Elephant apple) protein is Ribulose bisphosphate carboxylase large chain.